A 200-amino-acid chain; its full sequence is Protein Mbur_1344 (200 aa).

The region spanning 5 to 192 (SEGEQTVRLA…EVEPRGDIEE (188 aa)) is the AMMECR1 domain.

The sequence is that of Protein Mbur_1344 from Methanococcoides burtonii (strain DSM 6242 / NBRC 107633 / OCM 468 / ACE-M).